The sequence spans 254 residues: 5-oxoprolinase subunit A (254 aa).

Belongs to the LamB/PxpA family. In terms of assembly, forms a complex composed of PxpA, PxpB and PxpC.

It catalyses the reaction 5-oxo-L-proline + ATP + 2 H2O = L-glutamate + ADP + phosphate + H(+). In terms of biological role, catalyzes the cleavage of 5-oxoproline to form L-glutamate coupled to the hydrolysis of ATP to ADP and inorganic phosphate. This Rhodopseudomonas palustris (strain ATCC BAA-98 / CGA009) protein is 5-oxoprolinase subunit A.